The chain runs to 385 residues: Lipid-A-disaccharide synthase (385 aa).

The protein belongs to the LpxB family.

The enzyme catalyses a lipid X + a UDP-2-N,3-O-bis[(3R)-3-hydroxyacyl]-alpha-D-glucosamine = a lipid A disaccharide + UDP + H(+). The protein operates within bacterial outer membrane biogenesis; LPS lipid A biosynthesis. Condensation of UDP-2,3-diacylglucosamine and 2,3-diacylglucosamine-1-phosphate to form lipid A disaccharide, a precursor of lipid A, a phosphorylated glycolipid that anchors the lipopolysaccharide to the outer membrane of the cell. This is Lipid-A-disaccharide synthase from Rickettsia canadensis (strain McKiel).